Reading from the N-terminus, the 355-residue chain is Ribosomal RNA large subunit methyltransferase M (355 aa).

S-adenosyl-L-methionine contacts are provided by residues serine 191, 224 to 227, aspartate 243, aspartate 263, and aspartate 279; that span reads APGG. Lysine 308 (proton acceptor) is an active-site residue.

It belongs to the class I-like SAM-binding methyltransferase superfamily. RNA methyltransferase RlmE family. RlmM subfamily. In terms of assembly, monomer.

It localises to the cytoplasm. The enzyme catalyses cytidine(2498) in 23S rRNA + S-adenosyl-L-methionine = 2'-O-methylcytidine(2498) in 23S rRNA + S-adenosyl-L-homocysteine + H(+). Its function is as follows. Catalyzes the 2'-O-methylation at nucleotide C2498 in 23S rRNA. The protein is Ribosomal RNA large subunit methyltransferase M of Stenotrophomonas maltophilia (strain R551-3).